The sequence spans 155 residues: UPF0461 protein C5orf24 homolog (155 aa).

The span at 1–10 (MMHPVASSNP) shows a compositional bias: polar residues. Residues 1–20 (MMHPVASSNPAFCGPGKPSC) form a disordered region. At Ser-37 the chain carries Phosphoserine. The disordered stretch occupies residues 40 to 155 (SKYSHTVNHK…QQAFRCSSDA (116 aa)). Residues 57-70 (DPLNETHLQTTSGR) are compositionally biased toward polar residues. Residue Lys-75 forms a Glycyl lysine isopeptide (Lys-Gly) (interchain with G-Cter in SUMO2) linkage. The segment covering 80-92 (KKKNLNRSGKRGR) has biased composition (basic residues). The span at 94–107 (SGTTKSAGYRTSTG) shows a compositional bias: polar residues. Residue Ser-121 is modified to Phosphoserine.

It belongs to the UPF0461 family.

The protein is UPF0461 protein C5orf24 homolog of Pongo abelii (Sumatran orangutan).